Here is an 811-residue protein sequence, read N- to C-terminus: Leucine--tRNA ligase (811 aa).

The short motif at 40 to 50 (PYPSGRLHMGH) is the 'HIGH' region element. Positions 579 to 583 (KMSKS) match the 'KMSKS' region motif. Residue lysine 582 participates in ATP binding.

Belongs to the class-I aminoacyl-tRNA synthetase family.

It localises to the cytoplasm. The catalysed reaction is tRNA(Leu) + L-leucine + ATP = L-leucyl-tRNA(Leu) + AMP + diphosphate. The polypeptide is Leucine--tRNA ligase (Campylobacter fetus subsp. fetus (strain 82-40)).